The following is a 148-amino-acid chain: Putative carbonic anhydrase (148 aa).

Residues 1–146 (CLKRLQPGEM…LNGRTVFEVH (146 aa)) form the Alpha-carbonic anhydrase domain.

It belongs to the alpha-carbonic anhydrase family. Zn(2+) serves as cofactor. In terms of tissue distribution, component of the acid-insoluble organic matrix of the aragonitic skeleton (at protein level).

The protein resides in the secreted. The enzyme catalyses hydrogencarbonate + H(+) = CO2 + H2O. Reversible hydration of carbon dioxide. The sequence is that of Putative carbonic anhydrase from Acropora millepora (Staghorn coral).